We begin with the raw amino-acid sequence, 233 residues long: MESSGKMESGAGQQPQPPQPFLPPAACFFATAAAAAAAAAAAAAQSAQQQQQQQAPQQQAPQLSPVADGQPSGGGHKSAAKQVKRQRSSSPELMRCKRRLNFSGFGYSLPQQQPAAVARRNERERNRVKLVNLGFATLREHVPNGAANKKMSKVETLRSAVEYIRALQQLLDEHDAVSAAFQAGVLSPTISPNYSNDLNSMAGSPVSSYSSDEGSYDPLSPEEQELLDFTNWF.

Disordered stretches follow at residues 1 to 24 (MESSGKMESGAGQQPQPPQPFLPP) and 39 to 95 (AAAA…ELMR). Positions 39–62 (AAAAAAQSAQQQQQQQAPQQQAPQ) are enriched in low complexity. Residues 78 to 87 (SAAKQVKRQR) are compositionally biased toward basic residues. In terms of domain architecture, bHLH spans 115-167 (AAVARRNERERNRVKLVNLGFATLREHVPNGAANKKMSKVETLRSAVEYIRAL). Lysine 153 bears the N6-acetyllysine mark.

As to quaternary structure, efficient DNA binding requires dimerization with another bHLH protein. Forms a heterodimer with TCF3. As to expression, developing CNS and PNS at embryonic and postnatal stages.

Its subcellular location is the nucleus. Its function is as follows. Transcription factor that plays a key role in neuronal differentiation: acts as a pioneer transcription factor, accessing closed chromatin to allow other factors to bind and activate neural pathways. Directly binds the E box motif (5'-CANNTG-3') on promoters and promotes transcription of neuronal genes. The combination of three transcription factors, ASCL1, POU3F2/BRN2 and MYT1L, is sufficient to reprogram fibroblasts and other somatic cells into induced neuronal (iN) cells in vitro. Plays a role at early stages of development of specific neural lineages in most regions of the CNS, and of several lineages in the PNS. Essential for the generation of olfactory and autonomic neurons. Acts synergistically with FOXN4 to specify the identity of V2b neurons rather than V2a from bipotential p2 progenitors during spinal cord neurogenesis, probably through DLL4-NOTCH signaling activation. Involved in the regulation of neuroendocrine cell development in the glandular stomach. This Rattus norvegicus (Rat) protein is Achaete-scute homolog 1 (Ascl1).